Reading from the N-terminus, the 345-residue chain is Biotin synthase (345 aa).

In terms of domain architecture, Radical SAM core spans 67–295 (YKVQLASLLS…KSRIRLSAGR (229 aa)). [4Fe-4S] cluster-binding residues include Cys-82, Cys-86, and Cys-89. [2Fe-2S] cluster contacts are provided by Cys-126, Cys-158, Cys-218, and Arg-290.

The protein belongs to the radical SAM superfamily. Biotin synthase family. Homodimer. [4Fe-4S] cluster serves as cofactor. Requires [2Fe-2S] cluster as cofactor.

It carries out the reaction (4R,5S)-dethiobiotin + (sulfur carrier)-SH + 2 reduced [2Fe-2S]-[ferredoxin] + 2 S-adenosyl-L-methionine = (sulfur carrier)-H + biotin + 2 5'-deoxyadenosine + 2 L-methionine + 2 oxidized [2Fe-2S]-[ferredoxin]. It functions in the pathway cofactor biosynthesis; biotin biosynthesis; biotin from 7,8-diaminononanoate: step 2/2. In terms of biological role, catalyzes the conversion of dethiobiotin (DTB) to biotin by the insertion of a sulfur atom into dethiobiotin via a radical-based mechanism. This Prochlorococcus marinus (strain NATL2A) protein is Biotin synthase.